The primary structure comprises 421 residues: Atrochrysone carboxyl ACP thioesterase (421 aa).

Residues histidine 207, histidine 209, aspartate 211, and histidine 212 each contribute to the Zn(2+) site. Aspartate 211 acts as the Proton donor/acceptor in catalysis.

The protein belongs to the metallo-beta-lactamase superfamily. It depends on Zn(2+) as a cofactor. Specifically expressed in conidia.

It carries out the reaction atrochrysone carboxyl-[ACP] + H2O = atrochrysone carboxylate + holo-[ACP] + H(+). It functions in the pathway secondary metabolite biosynthesis. In terms of biological role, atrochrysone carboxyl ACP thioesterase; part of the gene cluster that mediates the biosynthesis of trypacidin, a mycotoxin with antiprotozoal activity and that plays a role in the infection process. The pathway begins with the synthesis of atrochrysone thioester by the polyketide synthase (PKS) tpcC. The atrochrysone carboxyl ACP thioesterase tpcB then breaks the thioester bond and releases the atrochrysone carboxylic acid from tpcC. The decarboxylase tpcK converts atrochrysone carboxylic acid to atrochrysone which is further reduced into emodin anthrone. The next step is performed by the emodin anthrone oxygenase tpcL that catalyzes the oxidation of emodin anthrone to emodin. Emodin O-methyltransferase encoded by tpcA catalyzes methylation of the 8-hydroxy group of emodin to form questin. Ring cleavage of questin by questin oxidase tpcI leads to desmethylsulochrin via several intermediates including questin epoxide. Another methylation step catalyzed by tpcM leads to the formation of sulochrin which is further converted to monomethylsulfochrin by tpcH. Finally, the tpcJ catalyzes the conversion of monomethylsulfochrin to trypacidin. Trypacidin is toxic for human pulmonary and bronchial epithelial cells by initiating the intracellular formation of nitric oxide (NO) and hydrogen peroxide (H(2)O(2)), thus triggering host necrotic cell death. The trypacidin pathway is also able to produce endocrocin via a distinct route from the endocrocin Enc pathway. This chain is Atrochrysone carboxyl ACP thioesterase, found in Aspergillus fumigatus (strain ATCC MYA-4609 / CBS 101355 / FGSC A1100 / Af293) (Neosartorya fumigata).